The chain runs to 36 residues: Insecticidal toxin LaIT1 (36 aa).

Intrachain disulfides connect C11/C23 and C17/C29.

In terms of tissue distribution, expressed by the venom gland.

It is found in the secreted. Affects the activity of both ryanodine-sensitive calcium-release channels RyR1 and RyR2 with high potency. At lower concentrations the toxin increases full openings of the RyRs, and at higher concentrations it inhibits full openings and induce openings to subconductance levels and reduces the number of full conductance openings. The different actions may be attributed to the toxins binding at different sites on the RyRs, with binding at a high-affinity site mediating the increase in full openings and the induction of subconductance states evoked upon binding to a lower-affinity site. Shows insect lethality against crickets and common cutworms (only shows paralysis against cockroaches), but no toxicity is observed in mice. The protein is Insecticidal toxin LaIT1 of Liocheles australasiae (Dwarf wood scorpion).